Reading from the N-terminus, the 475-residue chain is Amino acid permease 8 (475 aa).

The segment at 1-22 (MDAYNNPSAVESGDAAVKSVDD) is disordered. Topologically, residues 1-31 (MDAYNNPSAVESGDAAVKSVDDDGREKRTGT) are cytoplasmic. 2 helical membrane-spanning segments follow: residues 32–52 (FWTASAHIITAVIGSGVLSLA) and 53–73 (WAIAQLGWVAGTTVLVAFAII). Topologically, residues 74–120 (TYYTSTLLADCYRSPDSITGTRNYNYMGVVRSYLGGKKVQLCGVAQY) are cytoplasmic. Residues 121–141 (VNLVGVTIGYTITASISLVAI) form a helical membrane-spanning segment. Residues 142 to 157 (GKSNCYHDKGHKAKCS) are Extracellular-facing. A helical transmembrane segment spans residues 158-178 (VSNYPYMAAFGIVQIILSQLP). Topologically, residues 179 to 185 (NFHKLSF) are cytoplasmic. Residues 186 to 206 (LSIIAAVMSFSYASIGIGLAI) traverse the membrane as a helical segment. The Extracellular portion of the chain corresponds to 207-236 (ATVASGKIGKTELTGTVIGVDVTASEKVWK). The chain crosses the membrane as a helical span at residues 237-257 (LFQAIGDIAFSYAFTTILIEI). Over 258 to 276 (QDTLRSSPPENKVMKRASL) the chain is Cytoplasmic. Residues 277–297 (VGVSTTTVFYILCGCIGYAAF) traverse the membrane as a helical segment. Topologically, residues 298–314 (GNQAPGDFLTDFGFYEP) are extracellular. A helical membrane pass occupies residues 315 to 335 (YWLIDFANACIALHLIGAYQV). Residues 336 to 378 (YAQPFFQFVEENCNKKWPQSNFINKEYSSKVPLLGKCRVNLFR) lie on the Cytoplasmic side of the membrane. The helical transmembrane segment at 379-398 (LVWRTCYVVLTTFVAMIFPF) threads the bilayer. Residues 399-401 (FNA) are Extracellular-facing. Residues 402 to 424 (ILGLLGAFAFWPLTVYFPVAMHI) form a helical membrane-spanning segment. Over 425–441 (AQAKVKKYSRRWLALNL) the chain is Cytoplasmic. A helical membrane pass occupies residues 442–462 (LVLVCLIVSALAAVGSIIGLI). The Extracellular portion of the chain corresponds to 463–475 (NSVKSYKPFKNLD).

Belongs to the amino acid/polyamine transporter 2 family. Amino acid/auxin permease (AAAP) (TC 2.A.18.2) subfamily. In terms of tissue distribution, expressed in flower buds, siliques, developing seeds and funiculi.

Its subcellular location is the cell membrane. Amino acid-proton symporter. Stereospecific transporter with a broad specificity for glutamate, aspartate and neutral and acidic amino acids. This is Amino acid permease 8 (AAP8) from Arabidopsis thaliana (Mouse-ear cress).